Reading from the N-terminus, the 353-residue chain is Trans-enoyl reductase eqxC (353 aa).

NADP(+) is bound at residue 45–48 (VDTK). 131–138 (ISFMTTGL) contacts substrate. NADP(+) contacts are provided by residues 166-169 (SSAT), 189-192 (SPRN), Tyr207, and 254-255 (LE). 275–279 (GPQML) lines the substrate pocket. Residue 344–345 (IS) participates in NADP(+) binding.

The protein belongs to the zinc-containing alcohol dehydrogenase family. As to quaternary structure, monomer.

The catalysed reaction is L-serine + 7 malonyl-CoA + acetyl-CoA + 2 S-adenosyl-L-methionine + ATP + 8 NADPH + 11 H(+) = (5S)-3-[(2E,6R,8E,10E,12E)-2,6-dimethyltetradeca-2,8,10,12-tetraenoyl]-5-(hydroxymethyl)pyrrolidine-2,4-dione + AMP + 2 S-adenosyl-L-homocysteine + 7 CO2 + diphosphate + 8 NADP(+) + 8 CoA + 6 H2O. It functions in the pathway mycotoxin biosynthesis. Functionally, trans-enoyl reductase; part of the gene cluster that mediates the biosynthesis of equisetin, a trans-fused decalin-containing tetramic acid with antimicrobial activity. The PKS module of eqxS together with the enoylreductase eqxC catalyze the formation of the polyketide unit which is then conjugated to L-serine by the condensation domain of the eqxS NRPS module. Activity of the Dieckmann cyclase domain (RED) results in release of the Dieckmann product intermediate. Diels-Alderase eqx3 is involved in endo-selective Diels-Alder cycloaddition to form the decalin ring, leading to the production of N-desmethylequisetin also called trichosetin. Subsequent N-methylation is carried out by eqxD to give equisetin. The polypeptide is Trans-enoyl reductase eqxC (Fusarium heterosporum).